The sequence spans 276 residues: F420-dependent methylenetetrahydromethanopterin dehydrogenase (276 aa).

Belongs to the MTD family.

It carries out the reaction 5,10-methylenetetrahydromethanopterin + oxidized coenzyme F420-(gamma-L-Glu)(n) + 2 H(+) = 5,10-methenyl-5,6,7,8-tetrahydromethanopterin + reduced coenzyme F420-(gamma-L-Glu)(n). In terms of biological role, catalyzes the oxidation of methylene-H(4)MPT to methenyl-H(4)MPT(+). This is F420-dependent methylenetetrahydromethanopterin dehydrogenase from Methanosphaera stadtmanae (strain ATCC 43021 / DSM 3091 / JCM 11832 / MCB-3).